A 263-amino-acid polypeptide reads, in one-letter code: Receptor-transporting protein 1 (263 aa).

At 1–238 (MRIFRPWRLR…ETGSGCNFCS (238 aa)) the chain is on the cytoplasmic side. Residues 88-197 (ASGRFHCSWC…GEFCEACQEG (110 aa)) form a 3CxxC-type zinc finger. The chain crosses the membrane as a helical span at residues 239–259 (IPWCLFWATVLMLIIYLQFSF). The Extracellular segment spans residues 260 to 263 (RTSV).

This sequence belongs to the TMEM7 family. As to quaternary structure, interacts with olfactory receptors. Predominantly expressed in olfactory and vomeronasal organs, in mature olfactory sensory neurons.

It is found in the cell membrane. Functionally, specifically promotes functional cell surface expression of olfactory receptors, but not of other GPCRs. This is Receptor-transporting protein 1 (Rtp1) from Mus musculus (Mouse).